Here is a 199-residue protein sequence, read N- to C-terminus: Recombination protein RecR (199 aa).

The C4-type zinc-finger motif lies at 57 to 72; it reads CQSCRTYTEETLCPIC. Positions 81–176 constitute a Toprim domain; sequence STICVVETPA…MISRIAHGVP (96 aa).

The protein belongs to the RecR family.

Functionally, may play a role in DNA repair. It seems to be involved in an RecBC-independent recombinational process of DNA repair. It may act with RecF and RecO. The protein is Recombination protein RecR of Shewanella baltica (strain OS155 / ATCC BAA-1091).